We begin with the raw amino-acid sequence, 487 residues long: Betaine aldehyde dehydrogenase (487 aa).

Positions 27 and 93 each coordinate K(+). Residue 149–151 (GAW) participates in NAD(+) binding. Lys161 acts as the Charge relay system in catalysis. Residues 175–178 (KPSE) and 228–231 (SVPT) each bind NAD(+). Glu249 serves as the catalytic Proton acceptor. Gly251, Cys283, and Glu384 together coordinate NAD(+). Residue Cys283 is the Nucleophile of the active site. Cys283 is subject to Cysteine sulfenic acid (-SOH). Positions 454 and 457 each coordinate K(+). The Charge relay system role is filled by Glu461.

Belongs to the aldehyde dehydrogenase family. In terms of assembly, dimer of dimers. Requires K(+) as cofactor.

It catalyses the reaction betaine aldehyde + NAD(+) + H2O = glycine betaine + NADH + 2 H(+). It participates in amine and polyamine biosynthesis; betaine biosynthesis via choline pathway; betaine from betaine aldehyde: step 1/1. Its function is as follows. Involved in the biosynthesis of the osmoprotectant glycine betaine. Catalyzes the irreversible oxidation of betaine aldehyde to the corresponding acid. This chain is Betaine aldehyde dehydrogenase, found in Mesorhizobium japonicum (strain LMG 29417 / CECT 9101 / MAFF 303099) (Mesorhizobium loti (strain MAFF 303099)).